Reading from the N-terminus, the 244-residue chain is Krueppel-like factor 9 (244 aa).

2 disordered regions span residues 26–51 (EHGG…GDPG) and 79–143 (PSVC…EKRH). A compositionally biased stretch (basic and acidic residues) spans 32-51 (EAERLRLPEREVTKEHGDPG). At serine 122 the chain carries Phosphoserine. Basic residues predominate over residues 134-143 (KGKHASEKRH). C2H2-type zinc fingers lie at residues 143-167 (HKCP…YRVH), 173-197 (FPCT…YRTH), and 203-225 (FRCP…ARRH).

The protein belongs to the Sp1 C2H2-type zinc-finger protein family. Interacts with ZZEF1.

The protein resides in the nucleus. Its function is as follows. Transcription factor that binds to GC box promoter elements. Selectively activates mRNA synthesis from genes containing tandem repeats of GC boxes but represses genes with a single GC box. Acts as an epidermal circadian transcription factor regulating keratinocyte proliferation. The protein is Krueppel-like factor 9 (Klf9) of Mus musculus (Mouse).